Reading from the N-terminus, the 628-residue chain is (+)-alpha-pinene synthase, chloroplastic (628 aa).

Residues 1-48 constitute a chloroplast transit peptide; it reads MALVSAVPLNSKLCLRRTLFGFSHELKAIHSTVPNLGMCRGGKSIAPS. Mg(2+)-binding residues include Asp-379, Asp-383, and Asp-531. The short motif at 379–383 is the DDXXD motif element; the sequence is DDIYD. Position 539 (Ser-539) interacts with K(+).

It belongs to the terpene synthase family. Tpsd subfamily. The cofactor is Mg(2+). Mn(2+) serves as cofactor. It depends on K(+) as a cofactor.

The protein localises to the plastid. It localises to the chloroplast. The enzyme catalyses (2E)-geranyl diphosphate = (1R,5R)-alpha-pinene + diphosphate. Its pathway is terpene metabolism; oleoresin biosynthesis. Involved in defensive oleoresin formation in conifers in response to insect attack or other injury. Involved in monoterpene (C10) olefins biosynthesis. Produces mainly (+)-alpha-pinene (97%) with a small amount of (-)-alpha-pinene (3%). This is (+)-alpha-pinene synthase, chloroplastic (PT30) from Pinus taeda (Loblolly pine).